The primary structure comprises 79 residues: Apolipoprotein C-II (79 aa).

The first 21 residues, 1-21, serve as a signal peptide directing secretion; sequence MDLKVVAVSFLLLVLCSEAAG. The interval 45 to 52 is lipid binding; it reads GVEKLRDI. The lipoprotein lipase cofactor stretch occupies residues 56 to 79; sequence SVDAVGTYTSILTDQLYHWWCGEQ.

It belongs to the apolipoprotein C2 family. In terms of processing, proapolipoprotein C-II is synthesized as a sialic acid containing glycoprotein which is subsequently desialylated prior to its proteolytic processing. Proapolipoprotein C-II, the major form found in plasma undergoes proteolytic cleavage of its N-terminal hexapeptide to generate apolipoprotein C-II, which occurs as the minor form in plasma.

Its subcellular location is the secreted. In terms of biological role, component of chylomicrons, very low-density lipoproteins (VLDL), low-density lipoproteins (LDL), and high-density lipoproteins (HDL) in plasma. Plays an important role in lipoprotein metabolism as an activator of lipoprotein lipase. Both proapolipoprotein C-II and apolipoprotein C-II can activate lipoprotein lipase. The sequence is that of Apolipoprotein C-II (APOC2) from Alligator mississippiensis (American alligator).